Reading from the N-terminus, the 333-residue chain is Methionine import ATP-binding protein MetN 1 (333 aa).

The 240-residue stretch at 2–241 folds into the ABC transporter domain; it reads ITFEGVEKVY…PETETAKSFV (240 aa). Residue 38 to 45 participates in ATP binding; sequence GFSGAGKS.

It belongs to the ABC transporter superfamily. Methionine importer (TC 3.A.1.24) family. The complex is composed of two ATP-binding proteins (MetN), two transmembrane proteins (MetI) and a solute-binding protein (MetQ).

The protein localises to the cell membrane. The enzyme catalyses L-methionine(out) + ATP + H2O = L-methionine(in) + ADP + phosphate + H(+). It carries out the reaction D-methionine(out) + ATP + H2O = D-methionine(in) + ADP + phosphate + H(+). Part of the ABC transporter complex MetNIQ involved in methionine import. Responsible for energy coupling to the transport system. This chain is Methionine import ATP-binding protein MetN 1, found in Bacillus licheniformis (strain ATCC 14580 / DSM 13 / JCM 2505 / CCUG 7422 / NBRC 12200 / NCIMB 9375 / NCTC 10341 / NRRL NRS-1264 / Gibson 46).